Consider the following 481-residue polypeptide: Ribosomal RNA small subunit methyltransferase F (481 aa).

S-adenosyl-L-methionine-binding positions include alanine 125–lysine 131, glutamate 149, aspartate 176, and aspartate 194. Catalysis depends on cysteine 247, which acts as the Nucleophile.

The protein belongs to the class I-like SAM-binding methyltransferase superfamily. RsmB/NOP family.

The protein resides in the cytoplasm. It catalyses the reaction cytidine(1407) in 16S rRNA + S-adenosyl-L-methionine = 5-methylcytidine(1407) in 16S rRNA + S-adenosyl-L-homocysteine + H(+). Its function is as follows. Specifically methylates the cytosine at position 1407 (m5C1407) of 16S rRNA. The sequence is that of Ribosomal RNA small subunit methyltransferase F from Psychromonas ingrahamii (strain DSM 17664 / CCUG 51855 / 37).